The chain runs to 263 residues: Oxygen-evolving enhancer protein 2, chloroplastic (263 aa).

Residues 1–78 (MAAASCFHAL…VGTKVSPADA (78 aa)) constitute a chloroplast transit peptide. A compositionally biased stretch (low complexity) spans 14–30 (ARSSSSSLQSSSSRLPA). Residues 14-34 (ARSSSSSLQSSSSRLPAPIKP) are disordered.

Belongs to the PsbP family.

It localises to the plastid. The protein localises to the chloroplast thylakoid membrane. Functionally, may be involved in the regulation of photosystem II. The sequence is that of Oxygen-evolving enhancer protein 2, chloroplastic from Helianthus annuus (Common sunflower).